Reading from the N-terminus, the 204-residue chain is Large ribosomal subunit protein eL15 (204 aa).

It belongs to the eukaryotic ribosomal protein eL15 family. As to quaternary structure, component of the large ribosomal subunit.

It localises to the cytoplasm. In terms of biological role, component of the large ribosomal subunit. The ribosome is a large ribonucleoprotein complex responsible for the synthesis of proteins in the cell. This chain is Large ribosomal subunit protein eL15 (rpl15), found in Hypophthalmichthys nobilis (Bighead carp).